The following is a 529-amino-acid chain: Ectonucleoside triphosphate diphosphohydrolase 3 (529 aa).

The Cytoplasmic segment spans residues M1–P22. The chain crosses the membrane as a helical span at residues A23 to I43. At Q44–P485 the chain is on the extracellular side. N81 is a glycosylation site (N-linked (GlcNAc...) asparagine). A disulfide bond links C92 and C116. N149 carries an N-linked (GlcNAc...) asparagine glycan. Residue E182 is the Proton acceptor of the active site. G222–Q226 is an ATP binding site. Residues N238, N284, and N318 are each glycosylated (N-linked (GlcNAc...) asparagine). Intrachain disulfides connect C261–C308, C289–C334, and C347–C353. Residues N381 and N392 are each glycosylated (N-linked (GlcNAc...) asparagine). C399 and C422 form a disulfide bridge. N454 carries N-linked (GlcNAc...) asparagine glycosylation. The chain crosses the membrane as a helical span at residues V486–L506. Residues Y507–D529 lie on the Cytoplasmic side of the membrane.

Belongs to the GDA1/CD39 NTPase family. Ca(2+) is required as a cofactor. It depends on Mg(2+) as a cofactor.

It is found in the cell membrane. It catalyses the reaction a ribonucleoside 5'-triphosphate + 2 H2O = a ribonucleoside 5'-phosphate + 2 phosphate + 2 H(+). In terms of biological role, catalyzes the hydrolysis of nucleoside triphosphates and diphosphates. Has a threefold preference for the hydrolysis of ATP and UTP over ADP and UDP. The chain is Ectonucleoside triphosphate diphosphohydrolase 3 from Mus musculus (Mouse).